A 208-amino-acid chain; its full sequence is Protein-L-isoaspartate O-methyltransferase (208 aa).

The active site involves Ser-59.

The protein belongs to the methyltransferase superfamily. L-isoaspartyl/D-aspartyl protein methyltransferase family. Monomer.

It is found in the cytoplasm. The enzyme catalyses [protein]-L-isoaspartate + S-adenosyl-L-methionine = [protein]-L-isoaspartate alpha-methyl ester + S-adenosyl-L-homocysteine. Catalyzes the methyl esterification of L-isoaspartyl residues in peptides and proteins that result from spontaneous decomposition of normal L-aspartyl and L-asparaginyl residues. It plays a role in the repair and/or degradation of damaged proteins. The polypeptide is Protein-L-isoaspartate O-methyltransferase (pcm) (Shigella flexneri).